A 368-amino-acid polypeptide reads, in one-letter code: 2-aminoethylphosphonate--pyruvate transaminase (368 aa).

Position 192 is an N6-(pyridoxal phosphate)lysine (lysine 192).

Belongs to the class-V pyridoxal-phosphate-dependent aminotransferase family. PhnW subfamily. Homodimer. Pyridoxal 5'-phosphate serves as cofactor.

The catalysed reaction is (2-aminoethyl)phosphonate + pyruvate = phosphonoacetaldehyde + L-alanine. Functionally, involved in phosphonate degradation. The polypeptide is 2-aminoethylphosphonate--pyruvate transaminase (Pseudomonas putida (strain W619)).